Here is a 549-residue protein sequence, read N- to C-terminus: T-complex protein 1 subunit theta (549 aa).

The protein belongs to the TCP-1 chaperonin family. As to quaternary structure, heterooligomeric complex of about 850 to 900 kDa that forms two stacked rings, 12 to 16 nm in diameter. Interacts with CCT3, KNAT1, STM and TTG1. As to expression, expressed in shoot meristems, root tip, vasculature and leaf epidermis.

The protein resides in the cytoplasm. In terms of biological role, molecular chaperone; assists the folding of proteins upon ATP hydrolysis. Known to play a role, in vitro, in the folding of actin and tubulin. Contributes to stem cell maintenance through its impact on transcription factors trafficking through plasmodesmata. Probably involved in refolding translocated, partially unfolded proteins, including viral movement proteins. The sequence is that of T-complex protein 1 subunit theta from Arabidopsis thaliana (Mouse-ear cress).